Reading from the N-terminus, the 561-residue chain is Centromere protein T (561 aa).

The tract at residues 1–83 (MADHNPDSDS…HIQASGHLEE (83 aa)) is disordered. Over residues 18–27 (RVLDTADPRT) the composition is skewed to basic and acidic residues. Positions 34-46 (ARAGARRALLETA) are enriched in low complexity. Serine 47 carries the phosphoserine modification. Phosphothreonine is present on threonine 85. The interval 93–421 (ILLTAPESSI…RHHQFLEPAP (329 aa)) is flexible stalk domain. Disordered stretches follow at residues 256–292 (HSLP…PGKP) and 333–457 (AEKK…DPHK). Residues 276–288 (KTQSSGPGLQKNS) show a composition bias toward polar residues. Phosphoserine occurs at positions 343, 345, and 356. Positions 357 to 367 (RVEEAEGHTEV) are enriched in basic and acidic residues. Phosphoserine is present on residues serine 373, serine 385, serine 386, and serine 397. The segment covering 395–407 (AASPESASSTPES) has biased composition (low complexity).

Belongs to the CENP-T/CNN1 family. Component of the CENPA-CAD complex, composed of CENPI, CENPK, CENPL, CENPO, CENPP, CENPQ, CENPR and CENPS. The CENPA-CAD complex is probably recruited on centromeres by the CENPA-NAC complex, at least composed of CENPA, CENPC, CENPH, CENPM, CENPN, CENPT and CENPU. Identified in a centromeric complex containing histones H2A, H2B, H3 and H4, and at least CENPA, CENPB, CENPC, CENPT, CENPN, HJURP, SUPT16H, SSRP1 and RSF1. Interacts (via N-terminus) with the NDC80 complex. Heterodimer with CENPW; this dimer coassembles with CENPS-CENPX heterodimers at centromeres to form the tetrameric CENP-T-W-S-X complex. Dynamically phosphorylated at Ser-47 and probably also other sites during the cell cycle. Phosphorylated at Ser-47 during G2 phase, metaphase and anaphase, but not during telophase or G1 phase.

The protein resides in the nucleus. The protein localises to the chromosome. It is found in the centromere. It localises to the kinetochore. Functionally, component of the CENPA-NAC (nucleosome-associated) complex, a complex that plays a central role in assembly of kinetochore proteins, mitotic progression and chromosome segregation. The CENPA-NAC complex recruits the CENPA-CAD (nucleosome distal) complex and may be involved in incorporation of newly synthesized CENPA into centromeres. Part of a nucleosome-associated complex that binds specifically to histone H3-containing nucleosomes at the centromere, as opposed to nucleosomes containing CENPA. Component of the heterotetrameric CENP-T-W-S-X complex that binds and supercoils DNA, and plays an important role in kinetochore assembly. CENPT has a fundamental role in kinetochore assembly and function. It is one of the inner kinetochore proteins, with most further proteins binding downstream. Required for normal chromosome organization and normal progress through mitosis. The sequence is that of Centromere protein T (CENPT) from Homo sapiens (Human).